A 529-amino-acid polypeptide reads, in one-letter code: Berberine bridge enzyme-like 7 (529 aa).

The first 19 residues, 1–19 (MKEALSILCLALLVSVSEA), serve as a signal peptide directing secretion. Cysteine 32 and cysteine 95 are joined by a disulfide. An N-linked (GlcNAc...) asparagine glycan is attached at asparagine 52. The 179-residue stretch at 69 to 247 (YSSPNFKKLL…LSWKINLVKV (179 aa)) folds into the FAD-binding PCMH-type domain. Positions 110 to 172 (HDLEGLSYRS…QTLAFPAGVC (63 aa)) form a cross-link, 6-(S-cysteinyl)-8alpha-(pros-histidyl)-FAD (His-Cys). N-linked (GlcNAc...) asparagine glycosylation is found at asparagine 257, asparagine 341, and asparagine 439.

The protein belongs to the oxygen-dependent FAD-linked oxidoreductase family. FAD serves as cofactor. In terms of processing, the FAD cofactor is bound via a bicovalent 6-S-cysteinyl, 8alpha-N1-histidyl FAD linkage.

It localises to the secreted. Its subcellular location is the cell wall. In terms of biological role, probable flavin-dependent oxidoreductase. In Arabidopsis thaliana (Mouse-ear cress), this protein is Berberine bridge enzyme-like 7.